We begin with the raw amino-acid sequence, 362 residues long: Dihydroorotate dehydrogenase (quinone) (362 aa).

FMN-binding positions include 62–66 (AGYDK) and T86. K66 is a binding site for substrate. 111 to 115 (NRLGF) serves as a coordination point for substrate. FMN contacts are provided by N139 and N170. Position 170 (N170) interacts with substrate. Residue S173 is the Nucleophile of the active site. N175 contributes to the substrate binding site. Residues K215 and S243 each coordinate FMN. Residue 244-245 (NT) coordinates substrate. FMN-binding positions include G266, G295, and 316-317 (YS).

The protein belongs to the dihydroorotate dehydrogenase family. Type 2 subfamily. Monomer. FMN serves as cofactor.

The protein resides in the cell membrane. The enzyme catalyses (S)-dihydroorotate + a quinone = orotate + a quinol. It participates in pyrimidine metabolism; UMP biosynthesis via de novo pathway; orotate from (S)-dihydroorotate (quinone route): step 1/1. Its function is as follows. Catalyzes the conversion of dihydroorotate to orotate with quinone as electron acceptor. In Rhizobium etli (strain CIAT 652), this protein is Dihydroorotate dehydrogenase (quinone).